The chain runs to 464 residues: Olfactomedin (464 aa).

A signal peptide spans 1–16 (MYICLLTLVLIHAAAA). Residues Asn-21, Asn-85, Asn-143, Asn-228, Asn-279, and Asn-383 are each glycosylated (N-linked (GlcNAc...) asparagine). In terms of domain architecture, Olfactomedin-like spans 192–464 (SCQHQGLAHI…LLHYDIALKP (273 aa)). A disulfide bond links Cys-193 and Cys-394.

In terms of assembly, oligomer; disulfide-linked. In terms of processing, most, if not all, of the six potential sites for N-glycosylation carry carbohydrate moieties of 8-10 sugar residues. In terms of tissue distribution, expressed exclusively in olfactory neuroepithelium.

It is found in the secreted. It localises to the extracellular space. Functionally, may influence the maintenance, growth, or differentiation of chemosensory cilia on the apical dendrites of olfactory neurons. Major component of the extracellular matrix of the olfactory neuroepithelium. This Aquarana catesbeiana (American bullfrog) protein is Olfactomedin.